Here is a 295-residue protein sequence, read N- to C-terminus: Indole-3-glycerol phosphate synthase (295 aa).

It belongs to the TrpC family.

It catalyses the reaction 1-(2-carboxyphenylamino)-1-deoxy-D-ribulose 5-phosphate + H(+) = (1S,2R)-1-C-(indol-3-yl)glycerol 3-phosphate + CO2 + H2O. The protein operates within amino-acid biosynthesis; L-tryptophan biosynthesis; L-tryptophan from chorismate: step 4/5. The protein is Indole-3-glycerol phosphate synthase of Prochlorococcus marinus (strain MIT 9215).